The primary structure comprises 305 residues: Ribonuclease BN (305 aa).

Residues histidine 64, histidine 66, aspartate 68, histidine 69, histidine 141, aspartate 212, and histidine 270 each coordinate Zn(2+). The Proton acceptor role is filled by aspartate 68.

This sequence belongs to the RNase Z family. RNase BN subfamily. Homodimer. Zn(2+) serves as cofactor.

Zinc phosphodiesterase, which has both exoribonuclease and endoribonuclease activities. This chain is Ribonuclease BN, found in Escherichia coli O7:K1 (strain IAI39 / ExPEC).